Here is a 233-residue protein sequence, read N- to C-terminus: 2-C-methyl-D-erythritol 4-phosphate cytidylyltransferase (233 aa).

Belongs to the IspD/TarI cytidylyltransferase family. IspD subfamily.

The catalysed reaction is 2-C-methyl-D-erythritol 4-phosphate + CTP + H(+) = 4-CDP-2-C-methyl-D-erythritol + diphosphate. It functions in the pathway isoprenoid biosynthesis; isopentenyl diphosphate biosynthesis via DXP pathway; isopentenyl diphosphate from 1-deoxy-D-xylulose 5-phosphate: step 2/6. In terms of biological role, catalyzes the formation of 4-diphosphocytidyl-2-C-methyl-D-erythritol from CTP and 2-C-methyl-D-erythritol 4-phosphate (MEP). In Aromatoleum aromaticum (strain DSM 19018 / LMG 30748 / EbN1) (Azoarcus sp. (strain EbN1)), this protein is 2-C-methyl-D-erythritol 4-phosphate cytidylyltransferase.